Here is a 678-residue protein sequence, read N- to C-terminus: ABC transporter F family member 2 (678 aa).

ABC transporter domains lie at 84-342 (VRLE…EAQY) and 411-626 (VTVK…AREL). Residues 116-123 (GVNGAGKT) and 443-450 (GPNGCGKS) each bind ATP. Residues 630–678 (AELEEKAPKVKAKSKMSKAEREARKKQKMKAFQASKKKSKSSKNAKRWN) are disordered. The span at 653-678 (RKKQKMKAFQASKKKSKSSKNAKRWN) shows a compositional bias: basic residues.

This sequence belongs to the ABC transporter superfamily. ABCF family. EF3 (TC 3.A.1.121) subfamily.

The protein is ABC transporter F family member 2 (ABCF2) of Arabidopsis thaliana (Mouse-ear cress).